The chain runs to 344 residues: uncharacterized protein (344 aa).

Topologically, residues 1–98 (MIDFVKSRDT…NNDEIGIWNY (98 aa)) are cytoplasmic. The helical transmembrane segment at 99-119 (ISVAEMGGVLLFLSYWIWTCL) threads the bilayer. Position 120 (His120) is a topological domain, lumenal. The helical transmembrane segment at 121-141 (FSKIIFPAQKVICLYIFLFAL) threads the bilayer. The Cytoplasmic segment spans residues 142–198 (NQTLQECIEEYVFSSECIKYRQFYSVYEIIDFLRTNFYRLFVIYCALGFGITRTVPK). The chain crosses the membrane as a helical span at residues 199–219 (YLMIKGISIVIALCSVYWISL). At 220–222 (YKD) the chain is on the lumenal side. Residues 223 to 243 (VYVVSEIFDMIQYEVSPAIWV) form a helical membrane-spanning segment. At 244–273 (YSICHLLKQCTSVTTYENASKARFFRRMLN) the chain is on the cytoplasmic side. A helical membrane pass occupies residues 274–294 (AFIFIFCASPMLHYLSNIIFG). The Lumenal portion of the chain corresponds to 295–344 (NFDYRLSVIIGDLFTFMEKIAFPCYIMFPTHNEALAYNRNVAEEAQEKMI).

This sequence belongs to the UPF0742 family.

Its subcellular location is the endoplasmic reticulum. The protein resides in the membrane. This is an uncharacterized protein from Schizosaccharomyces pombe (strain 972 / ATCC 24843) (Fission yeast).